The sequence spans 202 residues: Small ribosomal subunit protein uS4c (202 aa).

The S4 RNA-binding domain occupies 90–158 (MRLDNIIFRL…MKRSRDSYEK (69 aa)).

Belongs to the universal ribosomal protein uS4 family. Part of the 30S ribosomal subunit. Contacts protein S5. The interaction surface between S4 and S5 is involved in control of translational fidelity.

The protein resides in the plastid. The protein localises to the chloroplast. In terms of biological role, one of the primary rRNA binding proteins, it binds directly to 16S rRNA where it nucleates assembly of the body of the 30S subunit. Functionally, with S5 and S12 plays an important role in translational accuracy. The protein is Small ribosomal subunit protein uS4c (rps4) of Anthoceros angustus (Hornwort).